The chain runs to 472 residues: Putative cytochrome P450 135B1 (472 aa).

Position 388 (C388) interacts with heme. Residues 442–472 (RDVSATSQATAQGAGCPAARGGGPSRAVGSQ) are disordered. Low complexity predominate over residues 452 to 472 (AQGAGCPAARGGGPSRAVGSQ).

It belongs to the cytochrome P450 family. Heme serves as cofactor.

This is Putative cytochrome P450 135B1 (cyp135B1) from Mycobacterium bovis (strain ATCC BAA-935 / AF2122/97).